Consider the following 304-residue polypeptide: MGPTASGKTDLAIALRQTLPVEVISVDSALIYKGMDIGTAKPSKAELELAPHRLIDILDPSESYSAMNFREDALREMAEITASGRIPLLAGGTMLYYKALLEGLSPLPSADPEIRAEIEAKAEQIGWSGLHRELLAIDPIAGKRINPNDSQRINRALEVFYITGKTMTELTAQQGDSLPYNVLQFAIAPQDRAVLHQRIEQRFYKMMELGFQQEVEKLRARSDLHKDLPSIRCVGYRQMWEYLDGDISLDEAIYKGICATRQLAKRQITWLRGWNSEITWLDSLDPTSSKLKMIEKIAQNSIKL.

Residue 2 to 9 participates in ATP binding; that stretch reads GPTASGKT. 4–9 is a substrate binding site; that stretch reads TASGKT. Interaction with substrate tRNA regions lie at residues 27–30, 151–155, 232–237, and 265–272; these read DSAL, QRINR, RCVGYR, and KRQITWLR.

The protein belongs to the IPP transferase family. Monomer. It depends on Mg(2+) as a cofactor.

The enzyme catalyses adenosine(37) in tRNA + dimethylallyl diphosphate = N(6)-dimethylallyladenosine(37) in tRNA + diphosphate. Functionally, catalyzes the transfer of a dimethylallyl group onto the adenine at position 37 in tRNAs that read codons beginning with uridine, leading to the formation of N6-(dimethylallyl)adenosine (i(6)A). The sequence is that of tRNA dimethylallyltransferase from Actinobacillus pleuropneumoniae serotype 5b (strain L20).